Reading from the N-terminus, the 215-residue chain is Adenylate kinase (215 aa).

10–15 (GAGKGT) is a binding site for ATP. An NMP region spans residues 30–59 (STGDMLRAAVKAGTPIGLKAKAVMEAGELV). AMP is bound by residues Thr31, Arg36, 57–59 (ELV), 85–88 (GYPR), and Gln92. Residues 126–163 (GRYTCANCGEGYHDRFKQPKVAGVCDVCGSAEFKRRPD) are LID. Arg127 contributes to the ATP binding site. Zn(2+) is bound by residues Cys130, Cys133, Cys150, and Cys153. Residues Arg160 and Arg172 each coordinate AMP. An ATP-binding site is contributed by Ala200.

Belongs to the adenylate kinase family. Monomer.

Its subcellular location is the cytoplasm. The enzyme catalyses AMP + ATP = 2 ADP. The protein operates within purine metabolism; AMP biosynthesis via salvage pathway; AMP from ADP: step 1/1. In terms of biological role, catalyzes the reversible transfer of the terminal phosphate group between ATP and AMP. Plays an important role in cellular energy homeostasis and in adenine nucleotide metabolism. In Rhizorhabdus wittichii (strain DSM 6014 / CCUG 31198 / JCM 15750 / NBRC 105917 / EY 4224 / RW1) (Sphingomonas wittichii), this protein is Adenylate kinase.